Reading from the N-terminus, the 82-residue chain is Defensin-like protein 275 (82 aa).

The N-terminal stretch at 1-23 (MALSKFQLVALLITYTLLFSCQS) is a signal peptide. Disulfide bonds link cysteine 36/cysteine 78, cysteine 42/cysteine 65, cysteine 48/cysteine 76, and cysteine 52/cysteine 77.

Belongs to the DEFL family.

It localises to the secreted. The chain is Defensin-like protein 275 from Arabidopsis thaliana (Mouse-ear cress).